We begin with the raw amino-acid sequence, 1357 residues long: DNA-directed RNA polymerase subunit beta (1357 aa).

This sequence belongs to the RNA polymerase beta chain family. The RNAP catalytic core consists of 2 alpha, 1 beta, 1 beta' and 1 omega subunit. When a sigma factor is associated with the core the holoenzyme is formed, which can initiate transcription.

It catalyses the reaction RNA(n) + a ribonucleoside 5'-triphosphate = RNA(n+1) + diphosphate. Functionally, DNA-dependent RNA polymerase catalyzes the transcription of DNA into RNA using the four ribonucleoside triphosphates as substrates. This Pseudomonas aeruginosa (strain UCBPP-PA14) protein is DNA-directed RNA polymerase subunit beta.